The chain runs to 370 residues: Galactose-1-phosphate uridylyltransferase (370 aa).

Zn(2+) is bound by residues cysteine 51 and cysteine 54. UDP-alpha-D-glucose is bound by residues alanine 60 and 76–77; that span reads NG. Zn(2+) is bound at residue histidine 121. Position 166 (asparagine 166) interacts with UDP-alpha-D-glucose. Residue histidine 177 participates in Zn(2+) binding. Histidine 179 (tele-UMP-histidine intermediate) is an active-site residue. Position 181 (glutamine 181) interacts with UDP-alpha-D-glucose. Fe cation contacts are provided by glutamate 195, histidine 294, histidine 311, and histidine 313. UDP-alpha-D-glucose is bound by residues 326–329 and 331–332; these read KFLV and FE.

The protein belongs to the galactose-1-phosphate uridylyltransferase type 1 family. In terms of assembly, homodimer. It depends on Zn(2+) as a cofactor.

The catalysed reaction is alpha-D-galactose 1-phosphate + UDP-alpha-D-glucose = alpha-D-glucose 1-phosphate + UDP-alpha-D-galactose. The protein operates within carbohydrate metabolism; galactose metabolism. The chain is Galactose-1-phosphate uridylyltransferase (GAL7) from Kluyveromyces lactis (strain ATCC 8585 / CBS 2359 / DSM 70799 / NBRC 1267 / NRRL Y-1140 / WM37) (Yeast).